The chain runs to 236 residues: Nopaline transport system permease protein NocQ (236 aa).

Residues 21–222 (AMMTVVVAAC…LLSSVSNRGF (202 aa)) enclose the ABC transmembrane type-1 domain. A run of 4 helical transmembrane segments spans residues 25–45 (VVVA…FAAA), 63–83 (VVRG…GGTL), 102–122 (IFVI…TEVI), and 199–219 (QPFT…SVSN).

Belongs to the binding-protein-dependent transport system permease family. HisMQ subfamily.

Its subcellular location is the cell inner membrane. Its function is as follows. Component of the nopaline active transport system probably consisting of four subunits: Q, M, P and T. This system is also capable of transporting octopine provided that catabolic functions are induced with nopaline. This Agrobacterium fabrum (strain C58 / ATCC 33970) (Agrobacterium tumefaciens (strain C58)) protein is Nopaline transport system permease protein NocQ (nocQ).